Reading from the N-terminus, the 876-residue chain is Alanine--tRNA ligase (876 aa).

Residues H568, H572, C669, and H673 each coordinate Zn(2+).

This sequence belongs to the class-II aminoacyl-tRNA synthetase family. Requires Zn(2+) as cofactor.

It localises to the cytoplasm. It catalyses the reaction tRNA(Ala) + L-alanine + ATP = L-alanyl-tRNA(Ala) + AMP + diphosphate. Functionally, catalyzes the attachment of alanine to tRNA(Ala) in a two-step reaction: alanine is first activated by ATP to form Ala-AMP and then transferred to the acceptor end of tRNA(Ala). Also edits incorrectly charged Ser-tRNA(Ala) and Gly-tRNA(Ala) via its editing domain. This chain is Alanine--tRNA ligase, found in Sulfurihydrogenibium sp. (strain YO3AOP1).